The following is a 238-amino-acid chain: Zinc import ATP-binding protein ZnuC (238 aa).

The ABC transporter domain occupies 5-220 (VKLKNVCVNL…LEFISIFGLK (216 aa)). 37–44 (GPNGAGKS) lines the ATP pocket.

This sequence belongs to the ABC transporter superfamily. Zinc importer (TC 3.A.1.15.5) family. In terms of assembly, the complex is composed of two ATP-binding proteins (ZnuC), two transmembrane proteins (ZnuB) and a solute-binding protein (ZnuA).

It localises to the cell inner membrane. It carries out the reaction Zn(2+)(out) + ATP(in) + H2O(in) = Zn(2+)(in) + ADP(in) + phosphate(in) + H(+)(in). Functionally, part of the ABC transporter complex ZnuABC involved in zinc import. Responsible for energy coupling to the transport system. The sequence is that of Zinc import ATP-binding protein ZnuC from Buchnera aphidicola subsp. Acyrthosiphon pisum (strain APS) (Acyrthosiphon pisum symbiotic bacterium).